A 93-amino-acid chain; its full sequence is Small ribosomal subunit protein uS19 (93 aa).

The protein belongs to the universal ribosomal protein uS19 family.

Protein S19 forms a complex with S13 that binds strongly to the 16S ribosomal RNA. The chain is Small ribosomal subunit protein uS19 from Lactobacillus helveticus (strain DPC 4571).